Reading from the N-terminus, the 155-residue chain is MINEKADSLVNAFKELLSQESFGSQSEIVSALQQMGFTHVNQSKVSRMLTKFGAVRTRNTRMEMVYCLPNELSVPNTGSPLKNLVLDVDHNETLIVIKTSPGAAQLIARLLDSVGKSEGILGTIAGDDTIFVTPTTGNDIQILITNIQKLFESSL.

The protein belongs to the ArgR family.

The protein resides in the cytoplasm. Its pathway is amino-acid biosynthesis; L-arginine biosynthesis [regulation]. Functionally, regulates arginine biosynthesis genes. This Histophilus somni (strain 2336) (Haemophilus somnus) protein is Arginine repressor.